Consider the following 494-residue polypeptide: UDP-N-acetylmuramoyl-L-alanyl-D-glutamate--L-lysine ligase (494 aa).

S30 is a binding site for UDP-N-acetyl-alpha-D-muramoyl-L-alanyl-D-glutamate. ATP is bound at residue 110-116; the sequence is GTNGKTS. Residues 152–153, S179, and R187 contribute to the UDP-N-acetyl-alpha-D-muramoyl-L-alanyl-D-glutamate site; that span reads TT. K219 is subject to N6-carboxylysine. The short motif at 406-409 is the L-lysine recognition motif element; that stretch reads DNPA.

It belongs to the MurCDEF family. MurE subfamily. Carboxylation is probably crucial for Mg(2+) binding and, consequently, for the gamma-phosphate positioning of ATP.

The protein resides in the cytoplasm. The catalysed reaction is UDP-N-acetyl-alpha-D-muramoyl-L-alanyl-D-glutamate + L-lysine + ATP = UDP-N-acetyl-alpha-D-muramoyl-L-alanyl-gamma-D-glutamyl-L-lysine + ADP + phosphate + H(+). It functions in the pathway cell wall biogenesis; peptidoglycan biosynthesis. Functionally, catalyzes the addition of L-lysine to the nucleotide precursor UDP-N-acetylmuramoyl-L-alanyl-D-glutamate (UMAG) in the biosynthesis of bacterial cell-wall peptidoglycan. The protein is UDP-N-acetylmuramoyl-L-alanyl-D-glutamate--L-lysine ligase of Staphylococcus epidermidis (strain ATCC 35984 / DSM 28319 / BCRC 17069 / CCUG 31568 / BM 3577 / RP62A).